The sequence spans 305 residues: Glutaminase 2 (305 aa).

Substrate is bound by residues Ser-61, Asn-113, Glu-158, Asn-165, Tyr-189, Tyr-241, and Val-259.

Belongs to the glutaminase family. Homotetramer.

The enzyme catalyses L-glutamine + H2O = L-glutamate + NH4(+). This is Glutaminase 2 from Clostridium perfringens (strain 13 / Type A).